A 71-amino-acid polypeptide reads, in one-letter code: Small ribosomal subunit protein bS21 (71 aa).

The span at 48–59 (EKASLAKRHAKR) shows a compositional bias: basic residues. The disordered stretch occupies residues 48–71 (EKASLAKRHAKRNARENARNTRLY). The segment covering 60–71 (NARENARNTRLY) has biased composition (basic and acidic residues).

Belongs to the bacterial ribosomal protein bS21 family.

The chain is Small ribosomal subunit protein bS21 from Actinobacillus pleuropneumoniae serotype 5b (strain L20).